The chain runs to 848 residues: Xylosyltransferase (848 aa).

Residues 1 to 14 lie on the Cytoplasmic side of the membrane; the sequence is MSLHRTLRRFLRKW. Residues 15–35 traverse the membrane as a helical; Signal-anchor for type II membrane protein segment; the sequence is KALVYAVSFILLIQAFFTFQS. The Lumenal portion of the chain corresponds to 36-843; the sequence is SPNLMEEEHL…PKTELISVKP (808 aa). Intrachain disulfides connect Cys145–Cys173, Cys189–Cys427, Cys446–Cys459, and Cys448–Cys457. Residues Val219, Asp247, and 276–278 each bind UDP-alpha-D-xylose; that span reads TIW. Asn306 is a glycosylation site (N-linked (GlcNAc...) asparagine). 379 to 380 provides a ligand contact to UDP-alpha-D-xylose; that stretch reads DW. Residues Ser460 and 482–483 each bind UDP-alpha-D-xylose; that span reads RK. Disulfide bonds link Cys529–Cys811 and Cys794–Cys822. N-linked (GlcNAc...) asparagine glycosylation occurs at Asn530. The segment at 824–848 is disordered; sequence NTNWSSLSPDPKTELISVKPDGRIR. An N-linked (GlcNAc...) asparagine glycan is attached at Asn826.

This sequence belongs to the glycosyltransferase 14 family. XylT subfamily. Requires a divalent metal cation as cofactor.

The protein localises to the endoplasmic reticulum membrane. Its subcellular location is the golgi apparatus membrane. It carries out the reaction UDP-alpha-D-xylose + L-seryl-[protein] = 3-O-(beta-D-xylosyl)-L-seryl-[protein] + UDP + H(+). Its pathway is glycan metabolism; chondroitin sulfate biosynthesis. The protein operates within glycan metabolism; heparan sulfate biosynthesis. In terms of biological role, catalyzes the first step in biosynthesis of glycosaminoglycan. Transfers D-xylose from UDP-D-xylose to specific serine residues of the core protein. Initial enzyme in the biosynthesis of chondroitin sulfate and dermatan sulfate proteoglycans in fibroblasts and chondrocytes. The polypeptide is Xylosyltransferase (xt) (Ciona intestinalis (Transparent sea squirt)).